The chain runs to 191 residues: MARRKAAPKRETLPDPLFHSELLAKFINAVMRNGKKSVAEKIVYGALDVVAKRVQNKSGEQGDGDGESGGKAGGIKKRSLGDIRTDENARALALETFKGALDKVMPNVEVKSRRVGGSTYQVPVEIRMARRQALARRWLVEYANKRNEKTMVLRLAHEILDAVEGRGGAIKKREDVHRMAKANQAFAHYKW.

The segment at 56–80 (NKSGEQGDGDGESGGKAGGIKKRSL) is disordered.

This sequence belongs to the universal ribosomal protein uS7 family. As to quaternary structure, part of the 30S ribosomal subunit. Contacts proteins S9 and S11.

In terms of biological role, one of the primary rRNA binding proteins, it binds directly to 16S rRNA where it nucleates assembly of the head domain of the 30S subunit. Is located at the subunit interface close to the decoding center, probably blocks exit of the E-site tRNA. The sequence is that of Small ribosomal subunit protein uS7 from Coxiella burnetii (strain RSA 493 / Nine Mile phase I).